Reading from the N-terminus, the 622-residue chain is Glutamyl-tRNA(Gln) amidotransferase subunit B, mitochondrial (622 aa).

A mitochondrion-targeting transit peptide spans 1 to 54; sequence MSRIPTRELGRYLLQGQICQRGCVASSVSKSRAKQLGRHPLLPHDRHQPTQARH. A disordered region spans residues 30 to 67; it reads KSRAKQLGRHPLLPHDRHQPTQARHAHTVTTTATPTQL. Residues 57 to 67 show a composition bias toward low complexity; it reads TVTTTATPTQL.

It belongs to the GatB/GatE family. GatB subfamily. As to quaternary structure, subunit of the heterotrimeric GatCAB amidotransferase (AdT) complex, composed of A, B and C subunits.

The protein resides in the mitochondrion. The catalysed reaction is L-glutamyl-tRNA(Gln) + L-glutamine + ATP + H2O = L-glutaminyl-tRNA(Gln) + L-glutamate + ADP + phosphate + H(+). In terms of biological role, allows the formation of correctly charged Gln-tRNA(Gln) through the transamidation of misacylated Glu-tRNA(Gln) in the mitochondria. The reaction takes place in the presence of glutamine and ATP through an activated gamma-phospho-Glu-tRNA(Gln). The polypeptide is Glutamyl-tRNA(Gln) amidotransferase subunit B, mitochondrial (Verticillium alfalfae (strain VaMs.102 / ATCC MYA-4576 / FGSC 10136) (Verticillium wilt of alfalfa)).